Here is a 444-residue protein sequence, read N- to C-terminus: Tol-Pal system protein TolB (444 aa).

Positions 1–19 are cleaved as a signal peptide; sequence MRNIIYFILSLLFSVTSYA.

The protein belongs to the TolB family. In terms of assembly, the Tol-Pal system is composed of five core proteins: the inner membrane proteins TolA, TolQ and TolR, the periplasmic protein TolB and the outer membrane protein Pal. They form a network linking the inner and outer membranes and the peptidoglycan layer.

It localises to the periplasm. In terms of biological role, part of the Tol-Pal system, which plays a role in outer membrane invagination during cell division and is important for maintaining outer membrane integrity. In Rickettsia africae (strain ESF-5), this protein is Tol-Pal system protein TolB.